The chain runs to 296 residues: Dof zinc finger protein DOF3.7 (296 aa).

Residues 41–69 (NTRPNATASNGGSGGNTNNTATMETRKAR) form a disordered region. Residues 45–62 (NATASNGGSGGNTNNTAT) show a composition bias toward low complexity. A Dof-type zinc finger spans residues 74–128 (VNCPRCNSTNTKFCYYNNYSLTQPRYFCKGCRRYWTEGGSLRNVPVGGSSRKNKR). Residues cysteine 76, cysteine 79, cysteine 101, and cysteine 104 each contribute to the Zn(2+) site. Residues 115–146 (RNVPVGGSSRKNKRSSTPLASPSNPKLPDLNP) form a disordered region. Residues 129 to 138 (SSTPLASPSN) show a composition bias toward polar residues.

As to expression, expressed in the phloem of the mother plant, including in roots, stem, leaves and flowers, but not present in the seed and embryo. In maturing siliques, found all through the funiculus connecting the placenta to the ovule, but not in the ovule.

It is found in the nucleus. In terms of biological role, transcription factor specifically involved in the maternal control of seed germination. Regulates transcription by binding to a 5'-AA[AG]G-3' consensus core sequence. May ensure the inactivity of a component that would be activated to trigger germination as a consequence of red light perception. The sequence is that of Dof zinc finger protein DOF3.7 (DOF3.7) from Arabidopsis thaliana (Mouse-ear cress).